The sequence spans 289 residues: Phosphatidylglycerol--prolipoprotein diacylglyceryl transferase (289 aa).

3 helical membrane-spanning segments follow: residues 24 to 44, 70 to 90, and 111 to 131; these read GIAIRWYGTMYIVAFAIVYLL, GGVLIGGRIGYILFYGFDWFL, and GINGMSFHGGLIGVAIALWLF. Arg158 contacts a 1,2-diacyl-sn-glycero-3-phospho-(1'-sn-glycerol). 2 helical membrane passes run 219 to 239 and 253 to 273; these read GYLSGLYLIGYGTVRFFIEFF and FSMGQVLCFLMIAAGIGILVW.

It belongs to the Lgt family.

It localises to the cell inner membrane. The enzyme catalyses L-cysteinyl-[prolipoprotein] + a 1,2-diacyl-sn-glycero-3-phospho-(1'-sn-glycerol) = an S-1,2-diacyl-sn-glyceryl-L-cysteinyl-[prolipoprotein] + sn-glycerol 1-phosphate + H(+). It functions in the pathway protein modification; lipoprotein biosynthesis (diacylglyceryl transfer). In terms of biological role, catalyzes the transfer of the diacylglyceryl group from phosphatidylglycerol to the sulfhydryl group of the N-terminal cysteine of a prolipoprotein, the first step in the formation of mature lipoproteins. This Chlorobaculum tepidum (strain ATCC 49652 / DSM 12025 / NBRC 103806 / TLS) (Chlorobium tepidum) protein is Phosphatidylglycerol--prolipoprotein diacylglyceryl transferase.